The sequence spans 498 residues: Glycerol kinase (498 aa).

Threonine 14 provides a ligand contact to ADP. ATP contacts are provided by threonine 14, threonine 15, and serine 16. Residue threonine 14 coordinates sn-glycerol 3-phosphate. Arginine 18 serves as a coordination point for ADP. Sn-glycerol 3-phosphate-binding residues include arginine 84, glutamate 85, tyrosine 136, and aspartate 243. Glycerol contacts are provided by arginine 84, glutamate 85, tyrosine 136, aspartate 243, and glutamine 244. Threonine 265 and glycine 308 together coordinate ADP. ATP-binding residues include threonine 265, glycine 308, glutamine 312, and glycine 409. ADP-binding residues include glycine 409 and asparagine 413.

This sequence belongs to the FGGY kinase family.

It catalyses the reaction glycerol + ATP = sn-glycerol 3-phosphate + ADP + H(+). The protein operates within polyol metabolism; glycerol degradation via glycerol kinase pathway; sn-glycerol 3-phosphate from glycerol: step 1/1. Its activity is regulated as follows. Inhibited by fructose 1,6-bisphosphate (FBP). Functionally, key enzyme in the regulation of glycerol uptake and metabolism. Catalyzes the phosphorylation of glycerol to yield sn-glycerol 3-phosphate. The protein is Glycerol kinase of Shewanella frigidimarina (strain NCIMB 400).